A 248-amino-acid chain; its full sequence is Pulmonary surfactant-associated protein A (248 aa).

The first 20 residues, 1-20 (MLLCSLTLTLILLAVSGTKC), serve as a signal peptide directing secretion. Residues 31–100 (GVPGIPGSPG…PGERGPPGPP (70 aa)) form the Collagen-like domain. The segment at 34-105 (GIPGSPGLPG…PPGPPAYPDE (72 aa)) is disordered. Residues 54–65 (PGPPGPIGPPGG) are compositionally biased toward pro residues. Residues 84-93 (ERGDKGEPGE) show a composition bias toward basic and acidic residues. The region spanning 134 to 247 (VGEKVFSTNG…CLQYRLAICE (114 aa)) is the C-type lectin domain. Disulfide bonds link Cys155–Cys246 and Cys224–Cys238. An N-linked (GlcNAc...) asparagine glycan is attached at Asn207. Positions 215, 217, 234, and 235 each coordinate Ca(2+).

The protein belongs to the SFTPA family. In terms of assembly, oligomeric complex of 6 set of homotrimers.

It localises to the secreted. It is found in the extracellular space. The protein localises to the extracellular matrix. The protein resides in the surface film. Its function is as follows. In presence of calcium ions, it binds to surfactant phospholipids and contributes to lower the surface tension at the air-liquid interface in the alveoli of the mammalian lung and is essential for normal respiration. Enhances the expression of MYO18A/SP-R210 on alveolar macrophages. The sequence is that of Pulmonary surfactant-associated protein A (SFTPA1) from Equus caballus (Horse).